A 553-amino-acid polypeptide reads, in one-letter code: Formate--tetrahydrofolate ligase 2 (553 aa).

63–70 (TSAGEGKS) serves as a coordination point for ATP.

The protein belongs to the formate--tetrahydrofolate ligase family.

The catalysed reaction is (6S)-5,6,7,8-tetrahydrofolate + formate + ATP = (6R)-10-formyltetrahydrofolate + ADP + phosphate. The protein operates within one-carbon metabolism; tetrahydrofolate interconversion. The chain is Formate--tetrahydrofolate ligase 2 from Lactobacillus acidophilus (strain ATCC 700396 / NCK56 / N2 / NCFM).